Reading from the N-terminus, the 177-residue chain is CASP-like protein 4D1 (177 aa).

Residues 1 to 20 (MTAPTAPSMAAPPAPSMVSR) are Cytoplasmic-facing. Residues 21–41 (MTALFLRVLTFAFLMVSLVIM) form a helical membrane-spanning segment. The Extracellular portion of the chain corresponds to 42–66 (TTNTGTIEIGIDEFKVRSKDFYSYR). The chain crosses the membrane as a helical span at residues 67–87 (YMLAAIAFGLTYTILQIALTL). The Cytoplasmic segment spans residues 88–107 (NHISKRNGAQTSGDGNLVFD). The chain crosses the membrane as a helical span at residues 108-128 (FYGDKVVSYILATGAAAAFGA). Residues 129-153 (TKELKTQLAGLGGDKFFNKGYASAS) lie on the Extracellular side of the membrane. A helical transmembrane segment spans residues 154–174 (LLLLGFVCTAILSVFSSYALP). Residues 175 to 177 (KKV) lie on the Cytoplasmic side of the membrane.

It belongs to the Casparian strip membrane proteins (CASP) family. Homodimer and heterodimers.

Its subcellular location is the cell membrane. The sequence is that of CASP-like protein 4D1 from Populus trichocarpa (Western balsam poplar).